Consider the following 312-residue polypeptide: MNWTELSIIINHEAVELATNILENHGSNGVVIEDSDDLINQPEDKYGEIYALKKEDYPDKGVRLKAYFNEMTYDDKLRQQIKDELLNLDELDQHNVQFSEQIIAETDWENEWKNYFHPFRASKKFTIVPSWETYAKEADEELCIELDPGMAFGTGDHPTTSMCLKAIETYVLPQHSVIDVGTGSGILSIASHLIGVKRIKALDIDEMAVSVAKENFRRNHCETLIEAVPGNLLKDETEKFDIVIANILAHIIDEMIEDAYNTLNEGGYFITSGIIKEKYEGIQSHMERVGFKIISEQHDNGWVCLVGQKVSE.

S-adenosyl-L-methionine-binding residues include Thr-160, Gly-181, Asp-203, and Asn-246.

The protein belongs to the methyltransferase superfamily. PrmA family.

It is found in the cytoplasm. It carries out the reaction L-lysyl-[protein] + 3 S-adenosyl-L-methionine = N(6),N(6),N(6)-trimethyl-L-lysyl-[protein] + 3 S-adenosyl-L-homocysteine + 3 H(+). Methylates ribosomal protein L11. The polypeptide is Ribosomal protein L11 methyltransferase (Staphylococcus aureus (strain USA300)).